A 436-amino-acid chain; its full sequence is GDP-mannose 6-dehydrogenase (436 aa).

The NAD(+) site is built by tyrosine 10, valine 11, aspartate 30, lysine 35, threonine 86, and threonine 124. Residues glutamate 161, lysine 210, asparagine 214, histidine 217, asparagine 225, tyrosine 256, tyrosine 257, arginine 259, and glycine 265 each contribute to the GDP-alpha-D-mannuronate site. Cysteine 268 is an active-site residue. Position 271 (lysine 271) interacts with NAD(+). Position 324 (lysine 324) interacts with GDP-alpha-D-mannuronate. Arginine 331 lines the NAD(+) pocket.

The protein belongs to the UDP-glucose/GDP-mannose dehydrogenase family.

The enzyme catalyses GDP-alpha-D-mannose + 2 NAD(+) + H2O = GDP-alpha-D-mannuronate + 2 NADH + 3 H(+). Its pathway is glycan biosynthesis; alginate biosynthesis. In terms of biological role, catalyzes the oxidation of guanosine diphospho-D-mannose (GDP-D-mannose) to GDP-D-mannuronic acid, a precursor for alginate polymerization. The alginate layer causes a mucoid phenotype and is essential for cyst formation. This chain is GDP-mannose 6-dehydrogenase (algD), found in Azotobacter vinelandii.